Consider the following 264-residue polypeptide: 3-methyl-2-oxobutanoate hydroxymethyltransferase (264 aa).

Positions 45 and 84 each coordinate Mg(2+). 3-methyl-2-oxobutanoate contacts are provided by residues 45 to 46 (DS), Asp-84, and Lys-113. Glu-115 contacts Mg(2+). Glu-182 serves as the catalytic Proton acceptor.

It belongs to the PanB family. As to quaternary structure, homodecamer; pentamer of dimers. It depends on Mg(2+) as a cofactor.

The protein resides in the cytoplasm. It catalyses the reaction 3-methyl-2-oxobutanoate + (6R)-5,10-methylene-5,6,7,8-tetrahydrofolate + H2O = 2-dehydropantoate + (6S)-5,6,7,8-tetrahydrofolate. Its pathway is cofactor biosynthesis; (R)-pantothenate biosynthesis; (R)-pantoate from 3-methyl-2-oxobutanoate: step 1/2. Its function is as follows. Catalyzes the reversible reaction in which hydroxymethyl group from 5,10-methylenetetrahydrofolate is transferred onto alpha-ketoisovalerate to form ketopantoate. This Nitrosococcus oceani (strain ATCC 19707 / BCRC 17464 / JCM 30415 / NCIMB 11848 / C-107) protein is 3-methyl-2-oxobutanoate hydroxymethyltransferase.